A 49-amino-acid polypeptide reads, in one-letter code: MRVNITLACTECGDRNYISTKNKRNHPERIELKKFCPRLNKYTLHRETK.

Belongs to the bacterial ribosomal protein bL33 family.

This chain is Large ribosomal subunit protein bL33B, found in Staphylococcus saprophyticus subsp. saprophyticus (strain ATCC 15305 / DSM 20229 / NCIMB 8711 / NCTC 7292 / S-41).